The chain runs to 79 residues: DNA-directed RNA polymerase subunit omega (79 aa).

The protein belongs to the RNA polymerase subunit omega family. The RNAP catalytic core consists of 2 alpha, 1 beta, 1 beta' and 1 omega subunit. When a sigma factor is associated with the core the holoenzyme is formed, which can initiate transcription.

It catalyses the reaction RNA(n) + a ribonucleoside 5'-triphosphate = RNA(n+1) + diphosphate. Functionally, promotes RNA polymerase assembly. Latches the N- and C-terminal regions of the beta' subunit thereby facilitating its interaction with the beta and alpha subunits. The sequence is that of DNA-directed RNA polymerase subunit omega (rpoZ) from Thermotoga maritima (strain ATCC 43589 / DSM 3109 / JCM 10099 / NBRC 100826 / MSB8).